The following is a 219-amino-acid chain: uncharacterized protein (219 aa).

A helical membrane pass occupies residues 13–32 (VFGLFLFSLIFFGLLSLATF).

It is found in the membrane. This is an uncharacterized protein from Aquifex aeolicus (strain VF5).